The primary structure comprises 67 residues: uncharacterized protein (67 aa).

A helical transmembrane segment spans residues 19 to 39 (ISFIIFFFFYFFFFYFFYGFW).

The protein resides in the membrane. This is an uncharacterized protein from Dictyostelium discoideum (Social amoeba).